Consider the following 489-residue polypeptide: Lysine--tRNA ligase (489 aa).

Glutamate 399 and glutamate 406 together coordinate Mg(2+).

This sequence belongs to the class-II aminoacyl-tRNA synthetase family. In terms of assembly, homodimer. Mg(2+) is required as a cofactor.

The protein resides in the cytoplasm. It carries out the reaction tRNA(Lys) + L-lysine + ATP = L-lysyl-tRNA(Lys) + AMP + diphosphate. The sequence is that of Lysine--tRNA ligase from Synechococcus sp. (strain CC9311).